The following is a 678-amino-acid chain: Methionine--tRNA ligase (678 aa).

The short motif at 12-22 is the 'HIGH' region element; the sequence is PYANGPIHLGH. Zn(2+) is bound by residues Cys143, Cys146, Cys156, and Cys159. The 'KMSKS' region motif lies at 328-332; it reads KMSKS. An ATP-binding site is contributed by Lys331. In terms of domain architecture, tRNA-binding spans 577 to 678; it reads DFSKVDLRIA…SGAQPGMRVK (102 aa).

It belongs to the class-I aminoacyl-tRNA synthetase family. MetG type 1 subfamily. Homodimer. It depends on Zn(2+) as a cofactor.

It is found in the cytoplasm. The enzyme catalyses tRNA(Met) + L-methionine + ATP = L-methionyl-tRNA(Met) + AMP + diphosphate. Is required not only for elongation of protein synthesis but also for the initiation of all mRNA translation through initiator tRNA(fMet) aminoacylation. The chain is Methionine--tRNA ligase from Acidithiobacillus ferrooxidans (strain ATCC 23270 / DSM 14882 / CIP 104768 / NCIMB 8455) (Ferrobacillus ferrooxidans (strain ATCC 23270)).